We begin with the raw amino-acid sequence, 341 residues long: HTH-type transcriptional repressor PurR (341 aa).

The HTH lacI-type domain maps to 2–56 (ATIKDVAKRAGVSTTTVSHVINKTRFVAEETKAAVRAAIKELHYSPSAVARSLKV). The H-T-H motif DNA-binding region spans 4–23 (IKDVAKRAGVSTTTVSHVIN). A DNA-binding region spans residues 48-56 (SAVARSLKV). Positions 73, 190, 192, 221, and 275 each coordinate hypoxanthine.

Homodimer.

It functions in the pathway purine metabolism; purine nucleotide biosynthesis [regulation]. In terms of biological role, is the main repressor of the genes involved in the de novo synthesis of purine nucleotides, regulating purB, purC, purEK, purF, purHD, purL, purMN and guaBA expression. PurR is allosterically activated to bind its cognate DNA by binding the purine corepressors, hypoxanthine or guanine, thereby effecting transcription repression. This is HTH-type transcriptional repressor PurR from Pectobacterium carotovorum subsp. carotovorum (strain PC1).